A 263-amino-acid chain; its full sequence is Trans-2-decenoyl-[acyl-carrier-protein] isomerase (263 aa).

This sequence belongs to the enoyl-CoA hydratase/isomerase family. In terms of assembly, homotetramer.

The enzyme catalyses (2E)-decenoyl-[ACP] = (3Z)-decenoyl-[ACP]. Its pathway is lipid metabolism; fatty acid biosynthesis. In terms of biological role, catalyzes the isomerization of trans-2-decenoyl-ACP to cis-3-decenoyl-ACP. Required for survival at low pH. The protein is Trans-2-decenoyl-[acyl-carrier-protein] isomerase (fabM) of Streptococcus mutans serotype c (strain ATCC 700610 / UA159).